Consider the following 166-residue polypeptide: Photosystem I assembly protein Ycf3 (166 aa).

TPR repeat units follow at residues 35–68, 72–105, and 120–153; these read AFTYYRNGMSAQSEGEYAEALQNYYQALRYEIDA, SYMLYNIGLIHSSNGQQSKALEYYYQALDRNPRL, and GEQALINNQDEISKIFFDKAADYWKEAIRLSPTS.

It belongs to the Ycf3 family.

It is found in the plastid. The protein resides in the chloroplast thylakoid membrane. Its function is as follows. Essential for the assembly of the photosystem I (PSI) complex. May act as a chaperone-like factor to guide the assembly of the PSI subunits. This chain is Photosystem I assembly protein Ycf3, found in Bigelowiella natans (Pedinomonas minutissima).